The sequence spans 311 residues: MIEFEKPNITKIDENKDYGKFVIEPLERGYGTTLGNSLRRVLLASLPGAAVTSINIDGVLHEFDTVPGVREDVMQIILNIKGIAVKSYVEDEKIIELDVEGPAEVTAGDILTDSDIEIVNPDHYLFTIGEGSSLKATMTVNSGRGYVPADENKKDNAPVGTLAVDSIYTPVTKVNYQVEPARVGSNDGFDKLTLEILTNGTIIPEDALGLSARILTEHLDLFTNLTEIAKSTEVMKEADTESDDRILDRTIEELDLSVRSYNCLKRAGINTVHDLTEKSEAEMMKVRNLGRKSLEEVKLKLIDLGLGLKDK.

The alpha N-terminal domain (alpha-NTD) stretch occupies residues 1–226 (MIEFEKPNIT…EHLDLFTNLT (226 aa)). The segment at 243–311 (DDRILDRTIE…IDLGLGLKDK (69 aa)) is alpha C-terminal domain (alpha-CTD).

The protein belongs to the RNA polymerase alpha chain family. As to quaternary structure, homodimer. The RNAP catalytic core consists of 2 alpha, 1 beta, 1 beta' and 1 omega subunit. When a sigma factor is associated with the core the holoenzyme is formed, which can initiate transcription.

The enzyme catalyses RNA(n) + a ribonucleoside 5'-triphosphate = RNA(n+1) + diphosphate. In terms of biological role, DNA-dependent RNA polymerase catalyzes the transcription of DNA into RNA using the four ribonucleoside triphosphates as substrates. This is DNA-directed RNA polymerase subunit alpha from Streptococcus pneumoniae serotype 4 (strain ATCC BAA-334 / TIGR4).